The primary structure comprises 224 residues: Probable C-&gt;U-editing enzyme APOBEC-2 (224 aa).

The tract at residues 1–25 (MAQKEEAAAAAEPASQNGEEVENLE) is disordered. The Zn(2+) site is built by Glu60 and His98. In terms of domain architecture, CMP/dCMP-type deaminase spans 64–169 (GRNKTFLCYV…PEIQAALRKL (106 aa)). The Proton donor role is filled by Glu100. Positions 128 and 131 each coordinate Zn(2+).

It belongs to the cytidine and deoxycytidylate deaminase family. Homotetramer. Requires Zn(2+) as cofactor.

It carries out the reaction cytidine(6666) in apoB mRNA + H2O + H(+) = uridine(6666) in apoB mRNA + NH4(+). Probable C to U editing enzyme whose physiological substrate is not yet known. Does not display detectable apoB mRNA editing. Has a low intrinsic cytidine deaminase activity. May play a role in the epigenetic regulation of gene expression through the process of active DNA demethylation. This Bos taurus (Bovine) protein is Probable C-&gt;U-editing enzyme APOBEC-2 (APOBEC2).